A 377-amino-acid chain; its full sequence is T-protein (377 aa).

One can recognise a Chorismate mutase domain in the interval 1 to 92; it reads MSFMEALKDL…ESYANENQFG (92 aa). The Prephenate/arogenate dehydrogenase domain maps to 101 to 364; sequence HKIVIVGGYG…DYSEQFLKES (264 aa).

It in the C-terminal section; belongs to the prephenate/arogenate dehydrogenase family.

It is found in the cytoplasm. The catalysed reaction is chorismate = prephenate. It carries out the reaction prephenate + NAD(+) = 3-(4-hydroxyphenyl)pyruvate + CO2 + NADH. Its pathway is amino-acid biosynthesis; L-tyrosine biosynthesis; (4-hydroxyphenyl)pyruvate from prephenate (NAD(+) route): step 1/1. The protein operates within metabolic intermediate biosynthesis; prephenate biosynthesis; prephenate from chorismate: step 1/1. The polypeptide is T-protein (tyrA) (Haemophilus influenzae (strain ATCC 51907 / DSM 11121 / KW20 / Rd)).